Here is a 206-residue protein sequence, read N- to C-terminus: Protein GrpE (206 aa).

Belongs to the GrpE family. As to quaternary structure, homodimer.

Its subcellular location is the cytoplasm. In terms of biological role, participates actively in the response to hyperosmotic and heat shock by preventing the aggregation of stress-denatured proteins, in association with DnaK and GrpE. It is the nucleotide exchange factor for DnaK and may function as a thermosensor. Unfolded proteins bind initially to DnaJ; upon interaction with the DnaJ-bound protein, DnaK hydrolyzes its bound ATP, resulting in the formation of a stable complex. GrpE releases ADP from DnaK; ATP binding to DnaK triggers the release of the substrate protein, thus completing the reaction cycle. Several rounds of ATP-dependent interactions between DnaJ, DnaK and GrpE are required for fully efficient folding. The sequence is that of Protein GrpE from Shewanella baltica (strain OS223).